We begin with the raw amino-acid sequence, 560 residues long: Trafficking protein particle complex II-specific subunit 65 (560 aa).

A disordered region spans residues 164-193 (SSKNTNNHLEKNNRATHRVSSKNSEVHEAD). Residues Ser393 and Ser398 each carry the phosphoserine modification.

In terms of assembly, part of the multisubunit TRAPP (transport protein particle) II complex composed of BET3, BET5, TRS20, TRS23, TRS31, TRS33, TRS65, TRS120 and TRS130. Interacts directly with TRS120 and TRS130.

Its subcellular location is the cytoplasm. It localises to the golgi apparatus. The protein localises to the cis-Golgi network. The protein operates within glycan metabolism; beta-glucan biosynthesis. Functionally, specific subunit of the TRAPP II complex, a highly conserved vesicle tethering complex that functions in the late Golgi as a guanine nucleotide exchanger (GEF) for the Golgi YPT1 GTPase. TRS65 plays a role in the YPT GEF activity of TRAPP II in concert with the two other TRAPP II-specific subunits TRS120 and TRS130. Involved in cell wall (1--&gt;6)-beta-glucan synthesis. This Saccharomyces cerevisiae (strain ATCC 204508 / S288c) (Baker's yeast) protein is Trafficking protein particle complex II-specific subunit 65 (TRS65).